The primary structure comprises 51 residues: Large ribosomal subunit protein bL33 (51 aa).

This sequence belongs to the bacterial ribosomal protein bL33 family.

The sequence is that of Large ribosomal subunit protein bL33 from Colwellia psychrerythraea (strain 34H / ATCC BAA-681) (Vibrio psychroerythus).